A 960-amino-acid polypeptide reads, in one-letter code: Dynamin-like GTPase OPA1, mitochondrial (960 aa).

The transit peptide at 1–87 (MWRLRRAAVA…IKYGYQPRRN (87 aa)) directs the protein to the mitochondrion. The Mitochondrial matrix segment spans residues 88–96 (FWPARLATR). The chain crosses the membrane as a helical span at residues 97 to 113 (LLKLRYLILGSAVGGGY). Residues 114–770 (TAKKTFDQWK…NAIENMVGPD (657 aa)) lie on the Mitochondrial intermembrane side of the membrane. Residues 210-254 (SDKEKIDQLQEELLHTQLKYQRILERLEKENKELRKLVLQKDDKG) are a coiled coil. Residue Lys228 is modified to N6-acetyllysine. A Dynamin-type G domain is found at 285–561 (QDHLPRVVVV…FWKMVRESVE (277 aa)). The interval 295–302 (GDQSAGKT) is G1 motif. GTP is bound by residues Ser298, Gly300, Lys301, Thr302, Ser303, and Gly317. Thr302 lines the Mg(2+) pocket. The G2 motif stretch occupies residues 321–324 (MMTR). Positions 323 and 398 each coordinate Mg(2+). The tract at residues 398-401 (DLPG) is G3 motif. The interval 467 to 470 (TKVD) is G4 motif. GTP is bound by residues Lys468, Asp470, and Thr503. The G5 motif stretch occupies residues 501–504 (VVTG). Stalk region stretches follow at residues 589–836 (DRNE…IKDT) and 874–928 (CNDV…IKLL). The paddle region stretch occupies residues 736 to 856 (SDKQQWDAAI…KTALNHCNLC (121 aa)). The stretch at 771–781 (WKKRWLYWKNR) is an intramembrane region. At 782-960 (TQEQCVHNET…AFIEALHQEK (179 aa)) the chain is on the mitochondrial intermembrane side. A disulfide bridge links Cys856 with Cys874. Residues 895 to 960 (RQQLTNTEVR…AFIEALHQEK (66 aa)) adopt a coiled-coil conformation.

This sequence belongs to the TRAFAC class dynamin-like GTPase superfamily. Dynamin/Fzo/YdjA family. Oligomeric complex consisting of membrane-bound and soluble forms of OPA1. Interacts with RCC1L; RCC1L acts as a guanine nucleotide exchange factor (GEF) for OPA1 by exchanging bound GDP for free GTP. Interacts with CHCHD3 and IMMT; these interactions occur preferentially with soluble OPA1 forms. Interacts with PRELID1. In terms of processing, cleaved by OMA1 or YME1L downstream of the transmembrane region in response to different signals to generate soluble forms. Cleaved by OMA1 at position S1 following stress conditions, generating the short soluble form (Dynamin-like GTPase OPA1, short form; S-OPA1). AFG3L2 is involved in the regulation of OMA1-dependent processing of OPA1. PARL-dependent proteolytic processing releases an antiapoptotic soluble form not required for mitochondrial fusion.

It localises to the mitochondrion inner membrane. The protein resides in the mitochondrion intermembrane space. The enzyme catalyses GTP + H2O = GDP + phosphate + H(+). Its activity is regulated as follows. Activated by guanine nucleotide exchange factor RCC1L. Dynamin-related GTPase that is essential for normal mitochondrial morphology by mediating fusion of the mitochondrial inner membranes, regulating cristae morphology and maintaining respiratory chain function. Exists in two forms: the transmembrane, long form (Dynamin-like GTPase OPA1, long form; L-OPA1), which is tethered to the inner mitochondrial membrane, and the short soluble form (Dynamin-like GTPase OPA1, short form; S-OPA1), which results from proteolytic cleavage and localizes in the intermembrane space. Both forms (L-OPA1 and S-OPA1) cooperate to catalyze the fusion of the mitochondrial inner membrane. The equilibrium between L-OPA1 and S-OPA1 is essential: excess levels of S-OPA1, produced by cleavage by OMA1 following loss of mitochondrial membrane potential, lead to an impaired equilibrium between L-OPA1 and S-OPA1, inhibiting mitochondrial fusion. The balance between L-OPA1 and S-OPA1 also influences cristae shape and morphology. Involved in remodeling cristae and the release of cytochrome c during apoptosis. Proteolytic processing by PARL in response to intrinsic apoptotic signals may lead to disassembly of OPA1 oligomers and release of the caspase activator cytochrome C (CYCS) into the mitochondrial intermembrane space. Acts as a regulator of T-helper Th17 cells, which are characterized by cells with fused mitochondria with tight cristae, by mediating mitochondrial membrane remodeling: OPA1 is required for interleukin-17 (IL-17) production. Its role in mitochondrial morphology is required for mitochondrial genome maintenance. Its function is as follows. Constitutes the transmembrane long form (L-OPA1) that plays a central role in mitochondrial inner membrane fusion and cristae morphology. L-OPA1 and the soluble short form (S-OPA1) form higher-order helical assemblies that coordinate the fusion of mitochondrial inner membranes. Inner membrane-anchored L-OPA1 molecules initiate membrane remodeling by recruiting soluble S-OPA1 to rapidly polymerize into a flexible cylindrical scaffold encaging the mitochondrial inner membrane. Once at the membrane surface, the formation of S-OPA1 helices induce bilayer curvature. OPA1 dimerization through the paddle region, which inserts into cardiolipin-containing membrane, promotes GTP hydrolysis and the helical assembly of a flexible OPA1 lattice on the membrane, which drives membrane curvature and mitochondrial fusion. Plays a role in the maintenance and remodeling of mitochondrial cristae, some invaginations of the mitochondrial inner membrane that provide an increase in the surface area. Probably acts by forming helical filaments at the inside of inner membrane tubes with the shape and dimensions of crista junctions. The equilibrium between L-OPA1 and S-OPA1 influences cristae shape and morphology: increased L-OPA1 levels promote cristae stacking and elongated mitochondria, while increased S-OPA1 levels correlated with irregular cristae packing and round mitochondria shape. In terms of biological role, constitutes the soluble short form (S-OPA1) generated by cleavage by OMA1, which plays a central role in mitochondrial inner membrane fusion and cristae morphology. The transmembrane long form (L-OPA1) and the S-OPA1 form higher-order helical assemblies that coordinate the fusion of mitochondrial inner membranes. Inner membrane-anchored L-OPA1 molecules initiate membrane remodeling by recruiting soluble S-OPA1 to rapidly polymerize into a flexible cylindrical scaffold encaging the mitochondrial inner membrane. Once at the membrane surface, the formation of S-OPA1 helices induce bilayer curvature. OPA1 dimerization through the paddle region, which inserts into cardiolipin-containing membrane, promotes GTP hydrolysis and the helical assembly of a flexible OPA1 lattice on the membrane, which drives membrane curvature and mitochondrial fusion. Excess levels of S-OPA1 produced by cleavage by OMA1 following stress conditions that induce loss of mitochondrial membrane potential, lead to an impaired equilibrium between L-OPA1 and S-OPA1, thereby inhibiting mitochondrial fusion. Involved in mitochondrial safeguard in response to transient mitochondrial membrane depolarization by mediating flickering: cleavage by OMA1 leads to excess production of S-OPA1, preventing mitochondrial hyperfusion. Plays a role in the maintenance and remodeling of mitochondrial cristae, some invaginations of the mitochondrial inner membrane that provide an increase in the surface area. Probably acts by forming helical filaments at the inside of inner membrane tubes with the shape and dimensions of crista junctions. The equilibrium between L-OPA1 and S-OPA1 influences cristae shape and morphology: increased L-OPA1 levels promote cristae stacking and elongated mitochondria, while increased S-OPA1 levels correlated with irregular cristae packing and round mitochondria shape. This is Dynamin-like GTPase OPA1, mitochondrial from Pongo abelii (Sumatran orangutan).